A 158-amino-acid polypeptide reads, in one-letter code: 2-C-methyl-D-erythritol 2,4-cyclodiphosphate synthase (158 aa).

Residues Asp8 and His10 each contribute to the a divalent metal cation site. 4-CDP-2-C-methyl-D-erythritol 2-phosphate-binding positions include 8–10 (DVH) and 34–35 (HS). His42 provides a ligand contact to a divalent metal cation. Residues 56–58 (DIG), 61–65 (FPDTD), 100–106 (AQRPKMA), 132–135 (TTEE), Phe139, and Arg142 each bind 4-CDP-2-C-methyl-D-erythritol 2-phosphate.

This sequence belongs to the IspF family. As to quaternary structure, homotrimer. Requires a divalent metal cation as cofactor.

The enzyme catalyses 4-CDP-2-C-methyl-D-erythritol 2-phosphate = 2-C-methyl-D-erythritol 2,4-cyclic diphosphate + CMP. It functions in the pathway isoprenoid biosynthesis; isopentenyl diphosphate biosynthesis via DXP pathway; isopentenyl diphosphate from 1-deoxy-D-xylulose 5-phosphate: step 4/6. In terms of biological role, involved in the biosynthesis of isopentenyl diphosphate (IPP) and dimethylallyl diphosphate (DMAPP), two major building blocks of isoprenoid compounds. Catalyzes the conversion of 4-diphosphocytidyl-2-C-methyl-D-erythritol 2-phosphate (CDP-ME2P) to 2-C-methyl-D-erythritol 2,4-cyclodiphosphate (ME-CPP) with a corresponding release of cytidine 5-monophosphate (CMP). The chain is 2-C-methyl-D-erythritol 2,4-cyclodiphosphate synthase from Pelobacter propionicus (strain DSM 2379 / NBRC 103807 / OttBd1).